The primary structure comprises 86 residues: Omega-theraphotoxin-Hhn1e (86 aa).

An N-terminal signal peptide occupies residues M1–A21. Positions S22–R50 are excised as a propeptide. Cystine bridges form between C52–C66 and C65–C78.

This sequence belongs to the neurotoxin 10 (Hwtx-1) family. 17 (Hntx-9) subfamily. In terms of tissue distribution, expressed by the venom gland.

The protein localises to the secreted. Ion channel inhibitor. This is Omega-theraphotoxin-Hhn1e from Cyriopagopus hainanus (Chinese bird spider).